The sequence spans 260 residues: Putative ABC transporter ATP-binding protein (260 aa).

The 240-residue stretch at 4 to 243 (ISMKNVTLKK…QVLENFYESP (240 aa)) folds into the ABC transporter domain. Residue 36-43 (GLNGSGKT) participates in ATP binding.

This sequence belongs to the ABC transporter superfamily.

This Streptococcus mutans serotype c (strain ATCC 700610 / UA159) protein is Putative ABC transporter ATP-binding protein (abcX).